A 115-amino-acid chain; its full sequence is Large ribosomal subunit protein uL18 (115 aa).

The tract at residues Met1–Pro29 is disordered. Over residues Leu10–Gly20 the composition is skewed to basic residues.

This sequence belongs to the universal ribosomal protein uL18 family. Part of the 50S ribosomal subunit; part of the 5S rRNA/L5/L18/L25 subcomplex. Contacts the 5S and 23S rRNAs.

Functionally, this is one of the proteins that bind and probably mediate the attachment of the 5S RNA into the large ribosomal subunit, where it forms part of the central protuberance. In Lactococcus lactis subsp. lactis (strain IL1403) (Streptococcus lactis), this protein is Large ribosomal subunit protein uL18.